The primary structure comprises 212 residues: Large ribosomal subunit protein bL25 (212 aa).

Positions 1–25 (MSQSTIHKIAVKKRTETGKNENNRL) are disordered. Residues 13–24 (KRTETGKNENNR) show a composition bias toward basic and acidic residues.

It belongs to the bacterial ribosomal protein bL25 family. CTC subfamily. In terms of assembly, part of the 50S ribosomal subunit; part of the 5S rRNA/L5/L18/L25 subcomplex. Contacts the 5S rRNA. Binds to the 5S rRNA independently of L5 and L18.

This is one of the proteins that binds to the 5S RNA in the ribosome where it forms part of the central protuberance. The protein is Large ribosomal subunit protein bL25 of Leptospira borgpetersenii serovar Hardjo-bovis (strain JB197).